The following is a 431-amino-acid chain: MPFITSVYAREVLDSRGNPTVEVEIVTDSGAFGRTLVPSGASTGEHEAVELRDGDKSRYLGKGVLKAVENVNDIIGPAILGDSVLDQVALDRKLIALDGTKNKGKLGANAILGVSIAAAKAAADLLNLELYQYLGGFNAKQLPVPMMNIINGGAHSDAPIDFQEFMIFPVGAPSFKEAIRWGAEIFHALKAILKKKGLSTAVGDEGGFAPNLASNEDTIDNILEAIKNAGYKAGEEVFIGFDVAASEFFDKAKGKYVFKKSTKEEFTSAELVEYYAGLVQKYPIISIEDGMDENDWDGWKLLTDKLGSKIQLVGDDLFVTNTEYLARGIKTNTANSILVKVNQIGTLTETFDAIEMAKRAGYTAVISHRSGETEDTTIADIAVAANTGQIKTGSASRTDRVAKYNQLMRIEDQLGEDAVYLGKDSFYNLKK.

A (2R)-2-phosphoglycerate-binding site is contributed by Gln163. Glu205 functions as the Proton donor in the catalytic mechanism. Mg(2+) is bound by residues Asp242, Glu288, and Asp315. (2R)-2-phosphoglycerate is bound by residues Lys340, Arg369, Ser370, and Lys391. The active-site Proton acceptor is the Lys340.

It belongs to the enolase family. Requires Mg(2+) as cofactor.

The protein resides in the cytoplasm. Its subcellular location is the secreted. It localises to the cell surface. The catalysed reaction is (2R)-2-phosphoglycerate = phosphoenolpyruvate + H2O. It functions in the pathway carbohydrate degradation; glycolysis; pyruvate from D-glyceraldehyde 3-phosphate: step 4/5. Functionally, catalyzes the reversible conversion of 2-phosphoglycerate (2-PG) into phosphoenolpyruvate (PEP). It is essential for the degradation of carbohydrates via glycolysis. This chain is Enolase, found in Acholeplasma laidlawii (strain PG-8A).